An 866-amino-acid chain; its full sequence is N-alpha-acetyltransferase 15, NatA auxiliary subunit (866 aa).

TPR repeat units follow at residues 46 to 79, 80 to 113, 148 to 184, and 224 to 257; these read GETL…DLKS, HVCW…DKDN, RASW…SPDK, and LAVE…NPEN. Lysine 262 carries the post-translational modification N6-acetyllysine. Serine 302 carries the phosphoserine modification. TPR repeat units lie at residues 374–407, 409–441, and 485–522; these read LWVQ…TPTL, ELFL…DTAD, and MWFQ…TDDQ. The tract at residues 500-866 is interaction with HYPK; sequence KFGEALKKCY…AEAEELANEI (367 aa). Serine 537 and serine 588 each carry phosphoserine. Over residues 579–594 the composition is skewed to basic and acidic residues; sequence EHEADTANMSDKELKK. The disordered stretch occupies residues 579–642; sequence EHEADTANMS…EEIGGPKEEL (64 aa). Positions 595–604 are enriched in basic residues; it reads LRNKQRRAQK. A compositionally biased stretch (basic and acidic residues) spans 606-621; it reads AQIEEEKKNAEKEKQQ. Residues 672-705 form a TPR 8 repeat; it reads IETHLFAFEIYFRKEKFLLMLQSVKRAFAIDSSH. 2 positions are modified to N6-acetyllysine: lysine 735 and lysine 756. Phosphoserine is present on residues serine 855 and serine 856.

As to quaternary structure, component of the N-terminal acetyltransferase A (NatA) complex composed of NAA10 or probably NAA11 and NAA15. Interacts with XRCC6, NAA50 and XRCC5. Associates with HYPK when in a complex with NAA10. Interaction with HYPK reduces the capacity to interact with NAA50. Post-translationally, cleaved by caspases during apoptosis.

The protein resides in the cytoplasm. It localises to the nucleus. Functionally, auxillary subunit of the N-terminal acetyltransferase A (NatA) complex which displays alpha (N-terminal) acetyltransferase activity. The NAT activity may be important for vascular, hematopoietic and neuronal growth and development. Required to control retinal neovascularization in adult ocular endothelial cells. In complex with XRCC6 and XRCC5 (Ku80), up-regulates transcription from the osteocalcin promoter. The polypeptide is N-alpha-acetyltransferase 15, NatA auxiliary subunit (NAA15) (Pongo abelii (Sumatran orangutan)).